The sequence spans 1033 residues: uncharacterized protein (1033 aa).

Coiled-coil stretches lie at residues 212-326 (EIFK…KMNN), 405-582 (ILNN…LYKF), 615-771 (LEKE…LKLN), and 797-1019 (KMKI…NIDN).

This is an uncharacterized protein from Plasmodium falciparum (isolate 3D7).